The following is a 417-amino-acid chain: Phosphoglycerate kinase (417 aa).

(2R)-3-phosphoglycerate is bound by residues Val23, Asp24, Phe25, Asn26, Gln39, Arg40, Ser63, His64, Gly66, Arg67, Leu122, Arg123, His170, and Arg171. Phosphoserine is present on Ser203. Gly214 provides a ligand contact to ADP. Position 214 (Gly214) interacts with CDP. 2 residues coordinate AMP: Ala215 and Lys216. Ala215 is a binding site for ATP. Ala215 is a binding site for Mg(2+). Asp219 serves as a coordination point for CDP. Asp219 contributes to the Mg(2+) binding site. Lys220 is an AMP binding site. Position 220 (Lys220) interacts with ATP. ADP is bound at residue Gly238. Residue Gly238 coordinates CDP. AMP-binding residues include Ala239 and Gly313. Ala239 and Gly313 together coordinate ATP. CDP contacts are provided by Gly338 and Phe343. Phe343 is an ADP binding site. Glu344 lines the AMP pocket. Residues Glu344, Asp375, and Thr376 each coordinate ATP. Asp375 contributes to the Mg(2+) binding site.

The protein belongs to the phosphoglycerate kinase family. As to quaternary structure, monomer. Requires Mg(2+) as cofactor. In terms of processing, dephosphorylated by PTC1 and PTC2 at Ser-203; the protein is cytosolic when dephosphorylated.

It is found in the cytoplasm. It localises to the cytosol. Its subcellular location is the mitochondrion. It carries out the reaction (2R)-3-phosphoglycerate + ATP = (2R)-3-phospho-glyceroyl phosphate + ADP. It participates in carbohydrate degradation; glycolysis; pyruvate from D-glyceraldehyde 3-phosphate: step 2/5. Its function is as follows. Catalyzes one of the two ATP producing reactions in the glycolytic pathway via the reversible conversion of 1,3-diphosphoglycerate to 3-phosphoglycerate. Both L- and D- forms of purine and pyrimidine nucleotides can be used as substrates, but the activity is much lower on pyrimidines. Negatively regulates the biosynthesis of acetyl-CoA from pyruvate in the mitochondrion and consequently also attenuates aflatoxin production. The protein is Phosphoglycerate kinase of Aspergillus flavus (strain ATCC 200026 / FGSC A1120 / IAM 13836 / NRRL 3357 / JCM 12722 / SRRC 167).